The primary structure comprises 537 residues: [Pyruvate dehydrogenase [acetyl-transferring]]-phosphatase 1, mitochondrial (537 aa).

The N-terminal 71 residues, 1 to 71 (MPAPTQLFFP…WWHYTQGRRY (71 aa)), are a transit peptide targeting the mitochondrion. The 417-residue stretch at 109–525 (ILGFDSNQLP…DDITIIVVQF (417 aa)) folds into the PPM-type phosphatase domain. Mn(2+) contacts are provided by aspartate 144 and glycine 145. Lysine 202 is subject to N6-acetyllysine. Aspartate 418 and aspartate 516 together coordinate Mn(2+).

It belongs to the PP2C family. Heterodimer of a catalytic (PDP1) and a regulatory (PDPR) subunit. It depends on Mn(2+) as a cofactor. Requires Mg(2+) as cofactor.

The protein localises to the mitochondrion. The enzyme catalyses O-phospho-L-seryl-[pyruvate dehydrogenase E1 alpha subunit] + H2O = L-seryl-[pyruvate dehydrogenase E1 alpha subunit] + phosphate. Its activity is regulated as follows. Magnesium-dependent and calcium-stimulated. PDP1 activity strongly depends on its Ca(2+)-dependent binding to the lipoyl domain of E2 subunit of component of the pyruvate dehydrogenase complex. Functionally, mitochondrial enzyme that catalyzes the dephosphorylation and concomitant reactivation of the alpha subunit of the E1 component of the pyruvate dehydrogenase complex (PDC), thereby stimulating the conversion of pyruvate into acetyl-CoA. The sequence is that of [Pyruvate dehydrogenase [acetyl-transferring]]-phosphatase 1, mitochondrial (PDP1) from Pongo abelii (Sumatran orangutan).